A 449-amino-acid polypeptide reads, in one-letter code: Tubulin alpha-2 chain (449 aa).

Gln-11 contributes to the GTP binding site. Position 40 is an N6-acetyllysine (Lys-40). The GTP site is built by Glu-71, Ser-140, Gly-144, Thr-145, Thr-179, Asn-206, and Asn-228. Mg(2+) is bound at residue Glu-71. Glu-254 is a catalytic residue.

It belongs to the tubulin family. Dimer of alpha and beta chains. A typical microtubule is a hollow water-filled tube with an outer diameter of 25 nm and an inner diameter of 15 nM. Alpha-beta heterodimers associate head-to-tail to form protofilaments running lengthwise along the microtubule wall with the beta-tubulin subunit facing the microtubule plus end conferring a structural polarity. Microtubules usually have 13 protofilaments but different protofilament numbers can be found in some organisms and specialized cells. Mg(2+) serves as cofactor. Post-translationally, undergoes a tyrosination/detyrosination cycle, the cyclic removal and re-addition of a C-terminal tyrosine residue by the enzymes tubulin tyrosine carboxypeptidase (TTCP) and tubulin tyrosine ligase (TTL), respectively. Acetylation of alpha chains at Lys-40 stabilizes microtubules and affects affinity and processivity of microtubule motors. This modification has a role in multiple cellular functions, ranging from cell motility, cell cycle progression or cell differentiation to intracellular trafficking and signaling. During the early stages of oogenesis lky/Alpha-tubulin N-acetyltransferase 2 is the main acetyltransferase responsible for Lys-40 acetylation in germline cells while Atat/alpha-tubulin N-acetyltransferase 1 is the main acetyltransferase responsible for Lys-40 acetylation in somatic cells.

It is found in the cytoplasm. It localises to the cytoskeleton. It catalyses the reaction GTP + H2O = GDP + phosphate + H(+). Its function is as follows. Tubulin is the major constituent of microtubules, a cylinder consisting of laterally associated linear protofilaments composed of alpha- and beta-tubulin heterodimers. Microtubules grow by the addition of GTP-tubulin dimers to the microtubule end, where a stabilizing cap forms. Below the cap, tubulin dimers are in GDP-bound state, owing to GTPase activity of alpha-tubulin. The protein is Tubulin alpha-2 chain (alphaTub85E) of Drosophila melanogaster (Fruit fly).